The following is a 295-amino-acid chain: UDP-N-acetylenolpyruvoylglucosamine reductase (295 aa).

Residues 23 to 188 enclose the FAD-binding PCMH-type domain; sequence KVGGPADFLA…ISAKFALKPG (166 aa). R167 is an active-site residue. The Proton donor role is filled by S217. E287 is a catalytic residue.

This sequence belongs to the MurB family. FAD serves as cofactor.

Its subcellular location is the cytoplasm. It catalyses the reaction UDP-N-acetyl-alpha-D-muramate + NADP(+) = UDP-N-acetyl-3-O-(1-carboxyvinyl)-alpha-D-glucosamine + NADPH + H(+). It participates in cell wall biogenesis; peptidoglycan biosynthesis. Cell wall formation. The polypeptide is UDP-N-acetylenolpyruvoylglucosamine reductase (Streptococcus pyogenes serotype M1).